We begin with the raw amino-acid sequence, 248 residues long: Ubiquinone/menaquinone biosynthesis C-methyltransferase UbiE (248 aa).

S68 and D92 together coordinate S-adenosyl-L-methionine.

It belongs to the class I-like SAM-binding methyltransferase superfamily. MenG/UbiE family.

It carries out the reaction a 2-demethylmenaquinol + S-adenosyl-L-methionine = a menaquinol + S-adenosyl-L-homocysteine + H(+). The enzyme catalyses a 2-methoxy-6-(all-trans-polyprenyl)benzene-1,4-diol + S-adenosyl-L-methionine = a 5-methoxy-2-methyl-3-(all-trans-polyprenyl)benzene-1,4-diol + S-adenosyl-L-homocysteine + H(+). The protein operates within quinol/quinone metabolism; menaquinone biosynthesis; menaquinol from 1,4-dihydroxy-2-naphthoate: step 2/2. It participates in cofactor biosynthesis; ubiquinone biosynthesis. Methyltransferase required for the conversion of demethylmenaquinol (DMKH2) to menaquinol (MKH2) and the conversion of 2-polyprenyl-6-methoxy-1,4-benzoquinol (DDMQH2) to 2-polyprenyl-3-methyl-6-methoxy-1,4-benzoquinol (DMQH2). The polypeptide is Ubiquinone/menaquinone biosynthesis C-methyltransferase UbiE (Rickettsia africae (strain ESF-5)).